The primary structure comprises 278 residues: Undecaprenyl-diphosphatase (278 aa).

The next 8 membrane-spanning stretches (helical) occupy residues 3-23 (YILI…IPIS), 42-62 (VAYS…IFYF), 88-108 (FLVI…LFVI), 112-132 (ILGL…IVIY), 152-172 (IIIV…RSGM), 190-210 (LSFI…VLFS), 225-245 (GLLI…NALL), and 253-273 (VVLL…LSDI).

It belongs to the UppP family.

Its subcellular location is the cell membrane. It catalyses the reaction di-trans,octa-cis-undecaprenyl diphosphate + H2O = di-trans,octa-cis-undecaprenyl phosphate + phosphate + H(+). Catalyzes the dephosphorylation of undecaprenyl diphosphate (UPP). This Saccharolobus solfataricus (strain ATCC 35092 / DSM 1617 / JCM 11322 / P2) (Sulfolobus solfataricus) protein is Undecaprenyl-diphosphatase.